The following is a 116-amino-acid chain: Large ribosomal subunit protein bL17 (116 aa).

Belongs to the bacterial ribosomal protein bL17 family. As to quaternary structure, part of the 50S ribosomal subunit. Contacts protein L32.

This chain is Large ribosomal subunit protein bL17, found in Prochlorococcus marinus (strain MIT 9301).